Consider the following 439-residue polypeptide: C4-dicarboxylate transport protein (439 aa).

9 helical membrane-spanning segments follow: residues 9–29 (SLYA…HFLP), 45–65 (LIKM…IAGM), 77–97 (LALL…LIIV), 145–165 (AFAK…GFAL), 185–205 (VLFT…FGAM), 223–243 (LMGA…GIVT), 290–310 (VVGL…AIYL), 332–352 (TLLA…GSGF), and 353–373 (IVLA…LALI). Residues 417–439 (NESPQAADQPEKILDQTNTKLGA) form a disordered region.

This sequence belongs to the dicarboxylate/amino acid:cation symporter (DAACS) (TC 2.A.23) family.

It localises to the cell inner membrane. Responsible for the transport of dicarboxylates such as succinate, fumarate, and malate from the periplasm across the membrane. This Janthinobacterium sp. (strain Marseille) (Minibacterium massiliensis) protein is C4-dicarboxylate transport protein.